The following is a 745-amino-acid chain: MDDASPLSNPAKEPAALRSLLGRTNRDWWPNQLSLDILHQHGRHGNPMGDDFDYAEAFKTLDYFAVKRDLHALMTDSQPWWPADYGHYGPFFIRMAWHSAGTYRTGDGRGGANSGNQRFAPLNSWPDNANLDKARRLLWPVKKKYGAKLSWADLMIMAGNVAFESMGAPVFGFGGGRADIFEPEKDVYWGTEEQWVGKGAKTRIVEGKAFEDPLAAVQMGLIYVNPEGPDGSPDPWASARDIRMTFARMGMNDEETLALTAGGHTFGKCHGAGDAAKIGAEPEGADIAQQGLGWTSSHESGMGDHTITSGLEGPWTPTPIKWDMSYFHMLLDYKYELVRSPAGAKQWQPVNPKPEDLAPGAHSPDRRVPTMMTTADLAFAMDPEYRKIAERFRDNPDQFADAFARAWFKLCHRDMGPKSRYLGPEVPAEDLIWQDPIPPVDHPLAEAADIASLKAKLLDSGLSVADLVRTAWASAATYRGSDHRGGANGARIRLAPQKDWEVNEPEKLARVLGVLEKVKADFDASAGGGKKISLADLIVLGGCAGIEKAARDAGHAIEVPFAPGRTDASPEQTDVESFEVLEPKADGFRNYLQVRFSVPTEELLIDRSQLLGLSAPEMTVLVGGLRVLGVNHGGSKNGVFTDRPGQLTNDFFVNLLDMGTAWKQVDDKADDLFVGTCRRTHEEKWTATRTDLVFGSNSQLRALSEVYASDDAGERFVKDFVRAWTKVMNADRFDLPRAQRLARAA.

Positions 97 to 223 (WHSAGTYRTG…LAAVQMGLIY (127 aa)) form a cross-link, tryptophyl-tyrosyl-methioninium (Trp-Tyr) (with M-249). Catalysis depends on H98, which acts as the Proton acceptor. Residues 223–249 (YVNPEGPDGSPDPWASARDIRMTFARM) constitute a cross-link (tryptophyl-tyrosyl-methioninium (Tyr-Met) (with W-97)). H264 contacts heme b. The interval 345 to 368 (KQWQPVNPKPEDLAPGAHSPDRRV) is disordered.

This sequence belongs to the peroxidase family. Peroxidase/catalase subfamily. In terms of assembly, homodimer or homotetramer. The cofactor is heme b. Post-translationally, formation of the three residue Trp-Tyr-Met cross-link is important for the catalase, but not the peroxidase activity of the enzyme.

It carries out the reaction H2O2 + AH2 = A + 2 H2O. It catalyses the reaction 2 H2O2 = O2 + 2 H2O. Bifunctional enzyme with both catalase and broad-spectrum peroxidase activity. This is Catalase-peroxidase from Phenylobacterium zucineum (strain HLK1).